Here is a 226-residue protein sequence, read N- to C-terminus: Small ribosomal subunit protein uS2c (226 aa).

Belongs to the universal ribosomal protein uS2 family.

Its subcellular location is the plastid. The protein resides in the chloroplast. This chain is Small ribosomal subunit protein uS2c (rps2), found in Ostreococcus tauri.